The following is a 148-amino-acid chain: 3-dehydroquinate dehydratase (148 aa).

Y26 (proton acceptor) is an active-site residue. 3 residues coordinate substrate: N75, H81, and D88. The active-site Proton donor is H101. Substrate-binding positions include 102–103 (LS) and R112.

The protein belongs to the type-II 3-dehydroquinase family. In terms of assembly, homododecamer.

The enzyme catalyses 3-dehydroquinate = 3-dehydroshikimate + H2O. It participates in metabolic intermediate biosynthesis; chorismate biosynthesis; chorismate from D-erythrose 4-phosphate and phosphoenolpyruvate: step 3/7. Functionally, catalyzes a trans-dehydration via an enolate intermediate. This is 3-dehydroquinate dehydratase from Shewanella frigidimarina (strain NCIMB 400).